Here is a 287-residue protein sequence, read N- to C-terminus: Homoserine kinase (287 aa).

78 to 88 contributes to the ATP binding site; the sequence is PLAHGLGSSSS.

The protein belongs to the GHMP kinase family. Homoserine kinase subfamily.

Its subcellular location is the cytoplasm. The catalysed reaction is L-homoserine + ATP = O-phospho-L-homoserine + ADP + H(+). Its pathway is amino-acid biosynthesis; L-threonine biosynthesis; L-threonine from L-aspartate: step 4/5. Functionally, catalyzes the ATP-dependent phosphorylation of L-homoserine to L-homoserine phosphate. This Lactobacillus acidophilus (strain ATCC 700396 / NCK56 / N2 / NCFM) protein is Homoserine kinase.